The chain runs to 189 residues: Peptidyl-tRNA hydrolase (189 aa).

Y15 contacts tRNA. Residue H20 is the Proton acceptor of the active site. Residues F66, N68, and N114 each contribute to the tRNA site.

Belongs to the PTH family. As to quaternary structure, monomer.

It is found in the cytoplasm. The catalysed reaction is an N-acyl-L-alpha-aminoacyl-tRNA + H2O = an N-acyl-L-amino acid + a tRNA + H(+). Functionally, hydrolyzes ribosome-free peptidyl-tRNAs (with 1 or more amino acids incorporated), which drop off the ribosome during protein synthesis, or as a result of ribosome stalling. Its function is as follows. Catalyzes the release of premature peptidyl moieties from peptidyl-tRNA molecules trapped in stalled 50S ribosomal subunits, and thus maintains levels of free tRNAs and 50S ribosomes. The chain is Peptidyl-tRNA hydrolase from Streptococcus pneumoniae (strain P1031).